The primary structure comprises 616 residues: Dihydroxy-acid dehydratase (616 aa).

Asp-81 serves as a coordination point for Mg(2+). Cys-122 is a [2Fe-2S] cluster binding site. The Mg(2+) site is built by Asp-123 and Lys-124. Lys-124 is modified (N6-carboxylysine). Cys-195 is a [2Fe-2S] cluster binding site. Glu-491 contributes to the Mg(2+) binding site. Catalysis depends on Ser-517, which acts as the Proton acceptor.

The protein belongs to the IlvD/Edd family. Homodimer. The cofactor is [2Fe-2S] cluster. Requires Mg(2+) as cofactor.

It catalyses the reaction (2R)-2,3-dihydroxy-3-methylbutanoate = 3-methyl-2-oxobutanoate + H2O. It carries out the reaction (2R,3R)-2,3-dihydroxy-3-methylpentanoate = (S)-3-methyl-2-oxopentanoate + H2O. It participates in amino-acid biosynthesis; L-isoleucine biosynthesis; L-isoleucine from 2-oxobutanoate: step 3/4. The protein operates within amino-acid biosynthesis; L-valine biosynthesis; L-valine from pyruvate: step 3/4. Its function is as follows. Functions in the biosynthesis of branched-chain amino acids. Catalyzes the dehydration of (2R,3R)-2,3-dihydroxy-3-methylpentanoate (2,3-dihydroxy-3-methylvalerate) into 2-oxo-3-methylpentanoate (2-oxo-3-methylvalerate) and of (2R)-2,3-dihydroxy-3-methylbutanoate (2,3-dihydroxyisovalerate) into 2-oxo-3-methylbutanoate (2-oxoisovalerate), the penultimate precursor to L-isoleucine and L-valine, respectively. In Tolumonas auensis (strain DSM 9187 / NBRC 110442 / TA 4), this protein is Dihydroxy-acid dehydratase.